We begin with the raw amino-acid sequence, 543 residues long: Exodeoxyribonuclease 7 large subunit (543 aa).

Residues 498–543 form a disordered region; sequence VTGEGDKASPPPQAASATTTPAPGRPNPLPKSPKKSEPPAGQGSLF.

The protein belongs to the XseA family. As to quaternary structure, heterooligomer composed of large and small subunits.

The protein resides in the cytoplasm. The enzyme catalyses Exonucleolytic cleavage in either 5'- to 3'- or 3'- to 5'-direction to yield nucleoside 5'-phosphates.. Its function is as follows. Bidirectionally degrades single-stranded DNA into large acid-insoluble oligonucleotides, which are then degraded further into small acid-soluble oligonucleotides. The chain is Exodeoxyribonuclease 7 large subunit from Allorhizobium ampelinum (strain ATCC BAA-846 / DSM 112012 / S4) (Agrobacterium vitis (strain S4)).